The primary structure comprises 161 residues: Arachidonate 5-lipoxygenase-activating protein (161 aa).

Over 1-8 (MDQETVGN) the chain is Lumenal. Residues 9–30 (VVLLAIVTLISVVQNGFFAHKV) traverse the membrane as a helical segment. The Cytoplasmic portion of the chain corresponds to 31–52 (EHESRTQNGRSFQRTGTLAFER). A helical transmembrane segment spans residues 53 to 77 (VYTANQNCVDAYPTFLAVLWSAGLL). Residues 78–80 (CSQ) lie on the Lumenal side of the membrane. A helical membrane pass occupies residues 81-102 (VPAAFAGLMYLFVRQKYFVGYL). At 103-107 (GERTQ) the chain is on the cytoplasmic side. Residues 108–115 (STPGYIFG) lie within the membrane without spanning it. Residues 116 to 128 (KRIILFLFLMSVA) form a helical membrane-spanning segment. Topologically, residues 129-161 (GIFNYYLIFFFGSDFENYIKTISTTISPLLLIP) are lumenal.

It belongs to the MAPEG family. As to quaternary structure, homotrimer. Interacts with LTC4S and ALOX5.

The protein localises to the nucleus membrane. The protein resides in the endoplasmic reticulum membrane. Its function is as follows. Required for leukotriene biosynthesis by ALOX5 (5-lipoxygenase). Anchors ALOX5 to the membrane. Binds arachidonic acid, and could play an essential role in the transfer of arachidonic acid to ALOX5. Binds to MK-886, a compound that blocks the biosynthesis of leukotrienes. The chain is Arachidonate 5-lipoxygenase-activating protein (ALOX5AP) from Homo sapiens (Human).